The following is a 944-amino-acid chain: Translation initiation factor IF-2 (944 aa).

A compositionally biased stretch (low complexity) spans 55-81 (LTGQAAAPAAAPSSAPRPGARSSAPKP). A disordered region spans residues 55 to 329 (LTGQAAAPAA…RTKRAEFELR (275 aa)). Over residues 82–92 (GGRPTPGPQPT) the composition is skewed to pro residues. Positions 93 to 107 (AAPEVEAPEASDVPV) are enriched in low complexity. Positions 123 to 135 (ASRKAAAEEKAQA) are enriched in basic and acidic residues. Composition is skewed to low complexity over residues 136–153 (EKSAASATPDAPAAETPS) and 211–222 (GQRPAAGAAGPR). Positions 223–236 (PAAPRPGSPRPGAP) are enriched in pro residues. Over residues 244–257 (GARPAGFGQRPAGA) the composition is skewed to low complexity. Positions 258–269 (GRPGGAPGGAGR) are enriched in gly residues. Low complexity predominate over residues 270-283 (PGAPAAGGFQRPAG). Over residues 284–310 (GFAGRPGGGGRGRGPGGGTAGAFGRGG) the composition is skewed to gly residues. A compositionally biased stretch (basic residues) spans 311 to 322 (GKSKSRKSKRTK). The region spanning 437–611 (IRPPVVTVMG…LTADAGLDLR (175 aa)) is the tr-type G domain. Residues 446–453 (GHVDHGKT) form a G1 region. 446-453 (GHVDHGKT) contributes to the GTP binding site. Residues 471-475 (GITQH) are G2. A G3 region spans residues 496–499 (DTPG). GTP-binding positions include 496–500 (DTPGH) and 550–553 (NKVD). The G4 stretch occupies residues 550-553 (NKVD). A G5 region spans residues 586-588 (SAL).

This sequence belongs to the TRAFAC class translation factor GTPase superfamily. Classic translation factor GTPase family. IF-2 subfamily.

Its subcellular location is the cytoplasm. In terms of biological role, one of the essential components for the initiation of protein synthesis. Protects formylmethionyl-tRNA from spontaneous hydrolysis and promotes its binding to the 30S ribosomal subunits. Also involved in the hydrolysis of GTP during the formation of the 70S ribosomal complex. The polypeptide is Translation initiation factor IF-2 (Clavibacter michiganensis subsp. michiganensis (strain NCPPB 382)).